A 154-amino-acid chain; its full sequence is Calmodulin-like protein 6 (154 aa).

4 EF-hand domains span residues Met1 to Ile36, Ile37 to Glu72, Val77 to Lys112, and Lys115 to Phe150. Asp14, Asp16, Asp18, Lys20, Glu25, Asp50, Asn52, Asp54, Cys56, Glu61, Asp90, Asn92, Asp94, Glu101, Asp128, Asp130, Asp132, Arg134, and Glu139 together coordinate Ca(2+).

Belongs to the calmodulin family.

Its function is as follows. Potential calcium sensor. This is Calmodulin-like protein 6 (CML6) from Arabidopsis thaliana (Mouse-ear cress).